We begin with the raw amino-acid sequence, 434 residues long: Alpha-enolase (434 aa).

Ser2 bears the N-acetylserine mark. Residue Lys5 is modified to N6-acetyllysine. Ser27 bears the Phosphoserine mark. Mg(2+) is bound at residue Ser40. At Tyr44 the chain carries Phosphotyrosine. Lys60 carries the N6-acetyllysine; alternate modification. Lys60 is subject to N6-succinyllysine; alternate. Residues Lys64 and Lys71 each carry the N6-acetyllysine modification. At Lys89 the chain carries N6-acetyllysine; alternate. Lys89 bears the N6-succinyllysine; alternate mark. Residues Lys92 and Lys126 each carry the N6-acetyllysine modification. The substrate site is built by His158 and Glu167. N6-acetyllysine is present on residues Lys193 and Lys199. Lys202 bears the N6-acetyllysine; alternate mark. Lys202 is covalently cross-linked (Glycyl lysine isopeptide (Lys-Gly) (interchain with G-Cter in SUMO2); alternate). The active-site Proton donor is the Glu210. N6-acetyllysine; alternate is present on residues Lys228 and Lys233. Residue Lys228 is modified to N6-succinyllysine; alternate. At Lys228 the chain carries N6-(2-hydroxyisobutyryl)lysine; alternate. Residue Lys233 is modified to N6-malonyllysine; alternate. Asp245 provides a ligand contact to Mg(2+). Phosphoserine is present on Ser254. An N6-acetyllysine modification is found at Lys256. Ser263 and Ser272 each carry phosphoserine. At Lys281 the chain carries N6-acetyllysine; alternate. Position 281 is an N6-(2-hydroxyisobutyryl)lysine; alternate (Lys281). Lys285 is subject to N6-acetyllysine. A Phosphotyrosine modification is found at Tyr287. Residue Ser291 is modified to Phosphoserine. Positions 293 and 318 each coordinate Mg(2+). Substrate is bound by residues Glu293 and Asp318. 2 positions are modified to N6-acetyllysine: Lys335 and Lys343. Residue Lys343 is the Proton acceptor of the active site. Residues 370–373 (SHRS) and Lys394 contribute to the substrate site. The tract at residues 405 to 434 (AKYNQLLRIEEELGSKAKFAGRNFRNPLAK) is required for interaction with PLG. Lys406 bears the N6-acetyllysine mark. Lys420 carries the post-translational modification N6-acetyllysine; alternate. Lys420 carries the N6-succinyllysine; alternate modification. An N6-malonyllysine; alternate modification is found at Lys420.

The protein belongs to the enolase family. Mammalian enolase is composed of 3 isozyme subunits, alpha, beta and gamma, which can form homodimers or heterodimers which are cell-type and development-specific. ENO1 interacts with PLG in the neuronal plasma membrane and promotes its activation. The C-terminal lysine is required for this binding. Interacts with ENO4 and PGAM2. Interacts with CMTM6. Mg(2+) serves as cofactor. In terms of processing, ISGylated. Lysine 2-hydroxyisobutyrylation (Khib) by p300/EP300 activates the phosphopyruvate hydratase activity.

It is found in the cytoplasm. It localises to the cell membrane. It catalyses the reaction (2R)-2-phosphoglycerate = phosphoenolpyruvate + H2O. Its pathway is carbohydrate degradation; glycolysis; pyruvate from D-glyceraldehyde 3-phosphate: step 4/5. In terms of biological role, glycolytic enzyme the catalyzes the conversion of 2-phosphoglycerate to phosphoenolpyruvate. In addition to glycolysis, involved in various processes such as growth control, hypoxia tolerance and allergic responses. May also function in the intravascular and pericellular fibrinolytic system due to its ability to serve as a receptor and activator of plasminogen on the cell surface of several cell-types such as leukocytes and neurons. Stimulates immunoglobulin production. In Pongo abelii (Sumatran orangutan), this protein is Alpha-enolase (ENO1).